The sequence spans 260 residues: Meiotic recombination protein rec6 (260 aa).

Residues 197–222 (QYSESSLLDDSQLLCSSPPVDSTEEA) are disordered. Residues 199–213 (SESSLLDDSQLLCSS) are compositionally biased toward low complexity.

The protein belongs to the TOP6B-like family. In terms of assembly, component of the DSB catalytic core (DSBC) complex, composed of at least rec12, rec6 and rec14. The complex interacts with mde2.

Required for formation of the rec12-mediated double-strand breaks (DSBs) that initiate meiotic recombination. May be involved primarily in the early steps of meiotic recombination. The chain is Meiotic recombination protein rec6 from Schizosaccharomyces pombe (strain 972 / ATCC 24843) (Fission yeast).